Reading from the N-terminus, the 393-residue chain is Ig gamma-1 chain C region, membrane-bound form (393 aa).

The tract at residues 1 to 97 (AKTTPPSVYP…ASSTKVDKKI (97 aa)) is CH1. Cysteine 27 and cysteine 82 are joined by a disulfide. The tract at residues 98–110 (VPRDCGCKPCICT) is hinge. Positions 111-217 (VPEVSSVFIF…PIEKTISKTK (107 aa)) are CH2. 2 cysteine pairs are disulfide-bonded: cysteine 138-cysteine 198 and cysteine 244-cysteine 302. Asparagine 174 is a glycosylation site (N-linked (GlcNAc...) asparagine). The interval 218-324 (GRPKAPQVYT…EKSLSHSPGL (107 aa)) is CH3. A helical membrane pass occupies residues 340–357 (GLWTTITIFISLFLLSVC). At 358–393 (YSAAVTLFKVKWIFSSVVELKQTLVPEYKNMIGQAP) the chain is on the cytoplasmic side.

The protein localises to the cell membrane. The polypeptide is Ig gamma-1 chain C region, membrane-bound form (Ighg1) (Mus musculus (Mouse)).